Consider the following 320-residue polypeptide: Mitochondrial thiamine pyrophosphate carrier (320 aa).

Solcar repeat units lie at residues 13–106 (NTKF…LTEL), 116–202 (REFS…LKHL), and 214–309 (NENL…FCNV). The helical transmembrane segment at 19–39 (AVAGSVSGLVTRALISPFDVI) threads the bilayer. Ser51 is subject to Phosphoserine. A run of 4 helical transmembrane segments spans residues 87–107 (ILSI…TELV), 122–142 (FVCG…VDVL), 173–193 (VFYK…GLQF), and 220–240 (LLCG…LDLF). Residues 241–246 (KKRLQV) carry the Substrate recognition motif. The helical transmembrane segment at 293-313 (ALSTGFMFFSYEFFCNVFHCM) threads the bilayer.

This sequence belongs to the mitochondrial carrier (TC 2.A.29) family. Expressed in all tissues examined except for placenta. Highest levels in colon, kidney, lung, testis, spleen, and brain.

The protein localises to the mitochondrion membrane. It catalyses the reaction thiamine phosphate(out) + thiamine diphosphate(in) = thiamine phosphate(in) + thiamine diphosphate(out). Its function is as follows. Mitochondrial transporter mediating uptake of thiamine diphosphate into mitochondria. It is not clear if the antiporter activity is affected by the membrane potential or by the proton electrochemical gradient. This Homo sapiens (Human) protein is Mitochondrial thiamine pyrophosphate carrier.